Here is a 513-residue protein sequence, read N- to C-terminus: Na(+)/H(+) antiporter NhaB (513 aa).

12 helical membrane-spanning segments follow: residues 23-43, 52-72, 97-117, 120-140, 144-164, 202-222, 238-258, 303-323, 348-368, 391-411, 447-467, and 475-495; these read LALI…PFVA, IFTL…LLAI, LLLM…LFIF, LLLS…AAAF, FLDA…FYGI, LMMH…VGEP, FFLR…LTCL, AIIG…VGLI, TESL…AVII, LFYI…VGTI, ATPN…APLI, and VWMA…CVEF.

This sequence belongs to the NhaB Na(+)/H(+) (TC 2.A.34) antiporter family.

The protein localises to the cell inner membrane. The enzyme catalyses 2 Na(+)(in) + 3 H(+)(out) = 2 Na(+)(out) + 3 H(+)(in). In terms of biological role, na(+)/H(+) antiporter that extrudes sodium in exchange for external protons. The protein is Na(+)/H(+) antiporter NhaB of Shigella sonnei (strain Ss046).